The primary structure comprises 467 residues: DNA repair protein RadA (467 aa).

The C4-type zinc finger occupies 10–27; that stretch reads CQNCGAVHSRWAGKCDSC. 98–105 is an ATP binding site; sequence GDPGIGKS. The RadA KNRFG motif signature appears at 260-264; that stretch reads KNRFG. Residues 359-467 form a lon-protease-like region; sequence DVYLNVAGGY…RIAASGAGKK (109 aa).

It belongs to the RecA family. RadA subfamily.

Functionally, DNA-dependent ATPase involved in processing of recombination intermediates, plays a role in repairing DNA breaks. Stimulates the branch migration of RecA-mediated strand transfer reactions, allowing the 3' invading strand to extend heteroduplex DNA faster. Binds ssDNA in the presence of ADP but not other nucleotides, has ATPase activity that is stimulated by ssDNA and various branched DNA structures, but inhibited by SSB. Does not have RecA's homology-searching function. In Brucella abortus (strain 2308), this protein is DNA repair protein RadA.